Consider the following 345-residue polypeptide: MSAFQPTIKRRESTKIYVGNVPIGGDAPIAVQSMTNTRTTDVEATVAQIKSLERVGADIVRVSVPTMDAAEAFKQIKQQVNVPLVADIHFDYRIALKVAEYGVDCLRINPGNIGREDRIRAVVDCARDKNIPIRIGVNAGSLEKDLQEKYGEPTPEALLESALRHVEILDRLNFNQFKVSVKASDVFLAVEAYRLLAKAIKQPLHLGITEAGGARAGAVKSAVGLGMLLAEGIGDTLRVSLAADPIEEIKVGFDILKSLRIRSRGINFIACPTCSRQEFDVIGTVNALEQRLEDIITPMDVSIIGCVVNGPGEALVSDLGVTGGNKKAVIILTANVKKSVLITKI.

C271, C274, C306, and E313 together coordinate [4Fe-4S] cluster.

This sequence belongs to the IspG family. [4Fe-4S] cluster serves as cofactor.

It carries out the reaction (2E)-4-hydroxy-3-methylbut-2-enyl diphosphate + oxidized [flavodoxin] + H2O + 2 H(+) = 2-C-methyl-D-erythritol 2,4-cyclic diphosphate + reduced [flavodoxin]. It functions in the pathway isoprenoid biosynthesis; isopentenyl diphosphate biosynthesis via DXP pathway; isopentenyl diphosphate from 1-deoxy-D-xylulose 5-phosphate: step 5/6. Converts 2C-methyl-D-erythritol 2,4-cyclodiphosphate (ME-2,4cPP) into 1-hydroxy-2-methyl-2-(E)-butenyl 4-diphosphate. The chain is 4-hydroxy-3-methylbut-2-en-1-yl diphosphate synthase (flavodoxin) from Haemophilus influenzae (strain PittEE).